The following is a 215-amino-acid chain: V-type ATP synthase subunit D (215 aa).

This sequence belongs to the V-ATPase D subunit family.

Its function is as follows. Produces ATP from ADP in the presence of a proton gradient across the membrane. The protein is V-type ATP synthase subunit D of Anaeromyxobacter sp. (strain Fw109-5).